Reading from the N-terminus, the 159-residue chain is UPF0262 protein Dshi_0980 (159 aa).

Belongs to the UPF0262 family.

The protein is UPF0262 protein Dshi_0980 of Dinoroseobacter shibae (strain DSM 16493 / NCIMB 14021 / DFL 12).